The following is a 129-amino-acid chain: uncharacterized protein (129 aa).

Belongs to the asfivirus C129R family.

Its subcellular location is the virion. Its function is as follows. Plays a role in the inhibition of type I interferon signaling pathway. Mechanistically, specifically interacts with 2',3'-cGAMP and cleaves it via its phosphodiesterase activity. In turn, prevents 2',3'-cGAMP interaction with host ER-resident STING1 leading to inhibition of downstream signaling pathway and type I interferon production. This is an uncharacterized protein from Ornithodoros (relapsing fever ticks).